The sequence spans 219 residues: MSRISKAEMSKLLSVYFIMGSNNCTKDPLQVLREALEGGITIFQFREKGEGALTGEERICFAKELQAICKEYGVPFIVNDDVELALELDADGVHVGQDDEGITSVREKMGDKIIGVSTHTIEEARWAIENGADYLGVGPIFPTSTKKDTKAVQGTKGLAHFREQGITIPIVGIGGISIENTASVIEAGADGISVISAISLAESAYESTKKLVEEVSKSL.

4-amino-2-methyl-5-(diphosphooxymethyl)pyrimidine is bound by residues 44–48 (QFREK) and N79. Mg(2+) is bound by residues D80 and D99. Residue S117 coordinates 4-amino-2-methyl-5-(diphosphooxymethyl)pyrimidine. 143–145 (TST) is a binding site for 2-[(2R,5Z)-2-carboxy-4-methylthiazol-5(2H)-ylidene]ethyl phosphate. K146 provides a ligand contact to 4-amino-2-methyl-5-(diphosphooxymethyl)pyrimidine. Residues G175 and 195–196 (IS) each bind 2-[(2R,5Z)-2-carboxy-4-methylthiazol-5(2H)-ylidene]ethyl phosphate.

It belongs to the thiamine-phosphate synthase family. It depends on Mg(2+) as a cofactor.

The catalysed reaction is 2-[(2R,5Z)-2-carboxy-4-methylthiazol-5(2H)-ylidene]ethyl phosphate + 4-amino-2-methyl-5-(diphosphooxymethyl)pyrimidine + 2 H(+) = thiamine phosphate + CO2 + diphosphate. It carries out the reaction 2-(2-carboxy-4-methylthiazol-5-yl)ethyl phosphate + 4-amino-2-methyl-5-(diphosphooxymethyl)pyrimidine + 2 H(+) = thiamine phosphate + CO2 + diphosphate. It catalyses the reaction 4-methyl-5-(2-phosphooxyethyl)-thiazole + 4-amino-2-methyl-5-(diphosphooxymethyl)pyrimidine + H(+) = thiamine phosphate + diphosphate. Its pathway is cofactor biosynthesis; thiamine diphosphate biosynthesis; thiamine phosphate from 4-amino-2-methyl-5-diphosphomethylpyrimidine and 4-methyl-5-(2-phosphoethyl)-thiazole: step 1/1. Condenses 4-methyl-5-(beta-hydroxyethyl)thiazole monophosphate (THZ-P) and 2-methyl-4-amino-5-hydroxymethyl pyrimidine pyrophosphate (HMP-PP) to form thiamine monophosphate (TMP). The chain is Thiamine-phosphate synthase from Bacillus cereus (strain ZK / E33L).